Here is a 606-residue protein sequence, read N- to C-terminus: Elongation factor 4 (606 aa).

A tr-type G domain is found at 10-192 (ENIRNFSIIA…AIVQQLPAPK (183 aa)). GTP is bound by residues 22 to 27 (DHGKST) and 139 to 142 (NKID).

The protein belongs to the TRAFAC class translation factor GTPase superfamily. Classic translation factor GTPase family. LepA subfamily.

Its subcellular location is the cell membrane. It carries out the reaction GTP + H2O = GDP + phosphate + H(+). Functionally, required for accurate and efficient protein synthesis under certain stress conditions. May act as a fidelity factor of the translation reaction, by catalyzing a one-codon backward translocation of tRNAs on improperly translocated ribosomes. Back-translocation proceeds from a post-translocation (POST) complex to a pre-translocation (PRE) complex, thus giving elongation factor G a second chance to translocate the tRNAs correctly. Binds to ribosomes in a GTP-dependent manner. In Lawsonia intracellularis (strain PHE/MN1-00), this protein is Elongation factor 4.